The primary structure comprises 311 residues: Small ribosomal subunit biogenesis GTPase RsgA (311 aa).

One can recognise a CP-type G domain in the interval 88–246 (SKEKEQVIVA…VIDTPGIREF (159 aa)). GTP is bound by residues 137-140 (NKID) and 188-196 (GHSGVGKST). Residues cysteine 270, cysteine 275, histidine 277, and cysteine 283 each coordinate Zn(2+).

Belongs to the TRAFAC class YlqF/YawG GTPase family. RsgA subfamily. In terms of assembly, monomer. Associates with 30S ribosomal subunit, binds 16S rRNA. It depends on Zn(2+) as a cofactor.

It is found in the cytoplasm. Its function is as follows. One of several proteins that assist in the late maturation steps of the functional core of the 30S ribosomal subunit. Helps release RbfA from mature subunits. May play a role in the assembly of ribosomal proteins into the subunit. Circularly permuted GTPase that catalyzes slow GTP hydrolysis, GTPase activity is stimulated by the 30S ribosomal subunit. The polypeptide is Small ribosomal subunit biogenesis GTPase RsgA (Chlorobaculum tepidum (strain ATCC 49652 / DSM 12025 / NBRC 103806 / TLS) (Chlorobium tepidum)).